The primary structure comprises 127 residues: ALK and LTK ligand 1 (127 aa).

The first 27 residues, 1 to 27 (MWLTKPSTPVSALLLLALALSPPGTQG), serve as a signal peptide directing secretion. 2 cysteine pairs are disulfide-bonded: Cys88–Cys124 and Cys102–Cys111.

Belongs to the ALKAL family.

Its subcellular location is the secreted. It is found in the cell membrane. Cytokine that acts as a physiological ligand for receptor tyrosine kinase LTK, leading to its activation. Monomeric ALKAL1 binds to LTK, leading to LTK homodimerization and activation. In contrast to ALKAL2, does not act as a potent physiological ligand for ALK. The chain is ALK and LTK ligand 1 from Mus musculus (Mouse).